The sequence spans 545 residues: Glucose-6-phosphate isomerase (545 aa).

E351 acts as the Proton donor in catalysis. Residues H382 and K510 contribute to the active site.

Belongs to the GPI family.

The protein resides in the cytoplasm. The catalysed reaction is alpha-D-glucose 6-phosphate = beta-D-fructose 6-phosphate. Its pathway is carbohydrate biosynthesis; gluconeogenesis. It functions in the pathway carbohydrate degradation; glycolysis; D-glyceraldehyde 3-phosphate and glycerone phosphate from D-glucose: step 2/4. Catalyzes the reversible isomerization of glucose-6-phosphate to fructose-6-phosphate. The protein is Glucose-6-phosphate isomerase of Shewanella pealeana (strain ATCC 700345 / ANG-SQ1).